The following is a 624-amino-acid chain: uncharacterized protein (624 aa).

The disordered stretch occupies residues 113–249; the sequence is SINVRTSATT…RFHPVTDINK (137 aa). The span at 118–225 shows a compositional bias: low complexity; the sequence is TSATTTESTN…ATTTESTNAS (108 aa). Over residues 226–249 the composition is skewed to basic and acidic residues; that stretch reads AKEDANKDGNAEDNRFHPVTDINK.

This is an uncharacterized protein from Saccharomyces cerevisiae (strain ATCC 204508 / S288c) (Baker's yeast).